The primary structure comprises 464 residues: Glycine receptor subunit alpha-3 (464 aa).

The N-terminal stretch at 1–33 (MAHVRHFRTLVSGFYFWEAALLLSLVATKETDS) is a signal peptide. Residues 34 to 255 (ARSRSAPMSP…RFHLERQMGY (222 aa)) are Extracellular-facing. Asparagine 71 carries an N-linked (GlcNAc...) asparagine glycan. A disulfide bond links cysteine 171 and cysteine 185. Residues glutamate 225 and aspartate 227 each contribute to the Zn(2+) site. A disulfide bridge links cysteine 231 with cysteine 242. Position 235–240 (235–240 (YNTGKF)) interacts with strychnine. Position 248 (histidine 248) interacts with Zn(2+). Residues 256 to 277 (YLIQMYIPSLLIVILSWVSFWI) traverse the membrane as a helical segment. The Cytoplasmic portion of the chain corresponds to 278–282 (NMDAA). A helical membrane pass occupies residues 283 to 303 (PARVALGITTVLTMTTQSSGS). Over 304–314 (RASLPKVSYVK) the chain is Extracellular. Residues 315 to 335 (AIDIWMAVCLLFVFSALLEYA) traverse the membrane as a helical segment. The Cytoplasmic segment spans residues 336-430 (AVNFVSRQHK…FIDRAKKIDT (95 aa)). Phosphoserine occurs at positions 370 and 379. The chain crosses the membrane as a helical span at residues 431–451 (ISRACFPLAFLIFNIFYWVIY). The Extracellular segment spans residues 452–464 (KILRHEDIHQQQD).

The protein belongs to the ligand-gated ion channel (TC 1.A.9) family. Glycine receptor (TC 1.A.9.3) subfamily. GLRA3 sub-subfamily. In terms of assembly, homopentamer (in vitro). Heteropentamer composed of GLRA3 and GLRB. Both homopentamers and heteropentamers form functional ion channels, but their characteristics are subtly different. Post-translationally, phosphorylated by PKA; this causes down-regulation of channel activity. As to expression, widely distributed throughout the central nervous system.

The protein resides in the postsynaptic cell membrane. Its subcellular location is the perikaryon. The protein localises to the cell projection. It localises to the dendrite. It is found in the synapse. The protein resides in the cell membrane. It catalyses the reaction chloride(in) = chloride(out). Glycine receptors are ligand-gated chloride channels. Channel opening is triggered by extracellular glycine. Channel characteristics depend on the subunit composition; heteropentameric channels display faster channel closure. Plays an important role in the down-regulation of neuronal excitability. Contributes to the generation of inhibitory postsynaptic currents. Contributes to increased pain perception in response to increased prostaglandin E2 levels. Plays a role in cellular responses to ethanol. This Homo sapiens (Human) protein is Glycine receptor subunit alpha-3 (GLRA3).